We begin with the raw amino-acid sequence, 452 residues long: UDP-N-acetylmuramoyl-L-alanine--L-glutamate ligase (452 aa).

Residue 118-124 (GSKGKST) coordinates ATP.

The protein belongs to the MurCDEF family. MurD2 subfamily.

The protein resides in the cytoplasm. It carries out the reaction UDP-N-acetyl-alpha-D-muramoyl-L-alanine + L-glutamate + ATP = UDP-N-acetyl-alpha-D-muramoyl-L-alanyl-L-glutamate + ADP + phosphate + H(+). The protein operates within cell wall biogenesis; peptidoglycan biosynthesis. Cell wall formation. Catalyzes the addition of L-glutamate to the nucleotide precursor UDP-N-acetylmuramoyl-L-alanine. The protein is UDP-N-acetylmuramoyl-L-alanine--L-glutamate ligase of Micromonospora sp. (strain ATCC 39149 / NRRL 15099 / SCC 1413).